Here is a 288-residue protein sequence, read N- to C-terminus: ATP synthase gamma chain (288 aa).

This sequence belongs to the ATPase gamma chain family. F-type ATPases have 2 components, CF(1) - the catalytic core - and CF(0) - the membrane proton channel. CF(1) has five subunits: alpha(3), beta(3), gamma(1), delta(1), epsilon(1). CF(0) has three main subunits: a, b and c.

The protein resides in the cell inner membrane. Produces ATP from ADP in the presence of a proton gradient across the membrane. The gamma chain is believed to be important in regulating ATPase activity and the flow of protons through the CF(0) complex. The sequence is that of ATP synthase gamma chain from Trichlorobacter lovleyi (strain ATCC BAA-1151 / DSM 17278 / SZ) (Geobacter lovleyi).